Reading from the N-terminus, the 98-residue chain is NADH-ubiquinone oxidoreductase chain 4L (98 aa).

A run of 3 helical transmembrane segments spans residues 2–22, 29–49, and 61–81; these read PSIFTNIILAFATALLGTLVF, SLLCLEGMMLSMFVLSTLIIL, and ILLLVFAACEAAVGLALLVMV.

The protein belongs to the complex I subunit 4L family. As to quaternary structure, core subunit of respiratory chain NADH dehydrogenase (Complex I) which is composed of 45 different subunits.

The protein resides in the mitochondrion inner membrane. It catalyses the reaction a ubiquinone + NADH + 5 H(+)(in) = a ubiquinol + NAD(+) + 4 H(+)(out). Functionally, core subunit of the mitochondrial membrane respiratory chain NADH dehydrogenase (Complex I) which catalyzes electron transfer from NADH through the respiratory chain, using ubiquinone as an electron acceptor. Part of the enzyme membrane arm which is embedded in the lipid bilayer and involved in proton translocation. This is NADH-ubiquinone oxidoreductase chain 4L (MT-ND4L) from Propithecus diadema diadema (Diademed sifaka).